We begin with the raw amino-acid sequence, 821 residues long: Maternal DNA replication licensing factor mcm6 (821 aa).

The segment at 159 to 186 (CMDCQSVVKDVEQQFRYTQPTICKNPVC) adopts a C4-type zinc-finger fold. Residues 347–554 (LYHNLCTSLF…TDYAIARRIV (208 aa)) form the MCM domain. Residue 397-404 (GDPSTSKS) coordinates ATP. Positions 529 to 532 (SRFD) match the Arginine finger motif.

Belongs to the MCM family. Component of the mcm2-7 complex (RLF-M). The complex forms a toroidal hexameric ring with the proposed subunit order mcm2-mcm6-mcm4-mcm7-mcm3-mcm5. The heterodimer of mmcm3/mcm5 interacts with mcm4, mmcm6, mcm7 and weakly with mcm2. Component of the CMG helicase complex, composed of the mcm2-7 complex, the GINS complex and cdc45.

It is found in the nucleus. The protein localises to the chromosome. The catalysed reaction is ATP + H2O = ADP + phosphate + H(+). Acts as a component of the mcm2-7 complex (mcm complex) which is the putative replicative helicase essential for 'once per cell cycle' DNA replication initiation and elongation in eukaryotic cells. The active ATPase sites in the mcm2-7 ring are formed through the interaction surfaces of two neighboring subunits such that a critical structure of a conserved arginine finger motif is provided in trans relative to the ATP-binding site of the Walker A box of the adjacent subunit. The six ATPase active sites, however, are likely to contribute differentially to the complex helicase activity. The existence of maternal and zygotic forms of mcm3 and mcm6 suggests that specific forms of mcm2-7 complexes may be used during different stages of development. In Xenopus tropicalis (Western clawed frog), this protein is Maternal DNA replication licensing factor mcm6.